Here is a 156-residue protein sequence, read N- to C-terminus: Transcriptional repressor NrdR (156 aa).

A zinc finger lies at 3 to 34 (CPFCGSMDTRVLDSRPTLDGAAIRRRRECISC). The 91-residue stretch at 49–139 (VLVIKKDGRR…VYRDFREVDQ (91 aa)) folds into the ATP-cone domain.

It belongs to the NrdR family. Zn(2+) serves as cofactor.

Functionally, negatively regulates transcription of bacterial ribonucleotide reductase nrd genes and operons by binding to NrdR-boxes. The sequence is that of Transcriptional repressor NrdR from Thermotoga neapolitana (strain ATCC 49049 / DSM 4359 / NBRC 107923 / NS-E).